A 124-amino-acid polypeptide reads, in one-letter code: Ribonuclease pancreatic (124 aa).

Basic and acidic residues predominate over residues 1–13 (KETAAAKFERQHM). A disordered region spans residues 1-24 (KETAAAKFERQHMDSSTSSASSSN). Lys7 and Arg10 together coordinate substrate. The active-site Proton acceptor is the His12. Disulfide bonds link Cys26-Cys84, Cys40-Cys95, Cys58-Cys110, and Cys65-Cys72. Substrate contacts are provided by residues 41–45 (KPVBT), Lys66, and Arg85. The Proton donor role is filled by His119.

This sequence belongs to the pancreatic ribonuclease family. Monomer. Interacts with and forms tight 1:1 complexes with RNH1. Dimerization of two such complexes may occur. Interaction with RNH1 inhibits this protein. In terms of tissue distribution, pancreas.

The protein resides in the secreted. The catalysed reaction is an [RNA] containing cytidine + H2O = an [RNA]-3'-cytidine-3'-phosphate + a 5'-hydroxy-ribonucleotide-3'-[RNA].. It catalyses the reaction an [RNA] containing uridine + H2O = an [RNA]-3'-uridine-3'-phosphate + a 5'-hydroxy-ribonucleotide-3'-[RNA].. Endonuclease that catalyzes the cleavage of RNA on the 3' side of pyrimidine nucleotides. Acts on single-stranded and double-stranded RNA. The protein is Ribonuclease pancreatic (RNASE1) of Boselaphus tragocamelus (Nilgai).